We begin with the raw amino-acid sequence, 132 residues long: Small ribosomal subunit protein bS6 (132 aa).

It belongs to the bacterial ribosomal protein bS6 family.

In terms of biological role, binds together with bS18 to 16S ribosomal RNA. The chain is Small ribosomal subunit protein bS6 from Chlorobium chlorochromatii (strain CaD3).